We begin with the raw amino-acid sequence, 291 residues long: uncharacterized protein (291 aa).

In terms of domain architecture, PNPLA spans 5-196 (GVFSGGGVKG…LSNFPIWLFS (192 aa)). The short motif at 9 to 14 (GGGVKG) is the GXGXXG element. The helical transmembrane segment at 34 to 50 (VAGTSAGAIIAAFIASG) threads the bilayer. The GXSXG signature appears at 36 to 40 (GTSAG). Ser38 (nucleophile) is an active-site residue. Catalysis depends on Asp183, which acts as the Proton acceptor. A DGA/G motif is present at residues 183 to 185 (DGG).

The protein localises to the cell membrane. Functionally, probable lipid hydrolase. This is an uncharacterized protein from Bacillus subtilis (strain 168).